The sequence spans 376 residues: Small ribosomal subunit protein uS11m (376 aa).

Belongs to the universal ribosomal protein uS11 family. Component of the mitochondrial small ribosomal subunit (mt-SSU). Mature N.crassa 74S mitochondrial ribosomes consist of a small (37S) and a large (54S) subunit. The 37S small subunit contains a 16S ribosomal RNA (16S mt-rRNA) and 32 different proteins. The 54S large subunit contains a 23S rRNA (23S mt-rRNA) and 42 different proteins.

It localises to the mitochondrion. In terms of biological role, component of the mitochondrial ribosome (mitoribosome), a dedicated translation machinery responsible for the synthesis of mitochondrial genome-encoded proteins, including at least some of the essential transmembrane subunits of the mitochondrial respiratory chain. The mitoribosomes are attached to the mitochondrial inner membrane and translation products are cotranslationally integrated into the membrane. This Neurospora crassa (strain ATCC 24698 / 74-OR23-1A / CBS 708.71 / DSM 1257 / FGSC 987) protein is Small ribosomal subunit protein uS11m (mrps18).